The primary structure comprises 63 residues: Beta-defensin 4 (63 aa).

A signal peptide spans 1 to 22; sequence MRLHHLLLAVLFLVLSAGSGFT. A Pyrrolidone carboxylic acid modification is found at glutamine 23. Disulfide bonds link cysteine 31–cysteine 60, cysteine 38–cysteine 53, and cysteine 43–cysteine 61.

Belongs to the beta-defensin family. Neutrophilic granules.

It is found in the secreted. In terms of biological role, has bactericidal activity. Active against E.coli ML35 and S.aureus 502A. This is Beta-defensin 4 (DEFB4) from Bos taurus (Bovine).